Consider the following 310-residue polypeptide: Aspartate carbamoyltransferase catalytic subunit (310 aa).

2 residues coordinate carbamoyl phosphate: R55 and T56. K83 serves as a coordination point for L-aspartate. The carbamoyl phosphate site is built by R105, H133, and Q136. Residues R166 and R220 each contribute to the L-aspartate site. Positions 261 and 262 each coordinate carbamoyl phosphate.

The protein belongs to the aspartate/ornithine carbamoyltransferase superfamily. ATCase family. Heterododecamer (2C3:3R2) of six catalytic PyrB chains organized as two trimers (C3), and six regulatory PyrI chains organized as three dimers (R2).

The catalysed reaction is carbamoyl phosphate + L-aspartate = N-carbamoyl-L-aspartate + phosphate + H(+). The protein operates within pyrimidine metabolism; UMP biosynthesis via de novo pathway; (S)-dihydroorotate from bicarbonate: step 2/3. Its function is as follows. Catalyzes the condensation of carbamoyl phosphate and aspartate to form carbamoyl aspartate and inorganic phosphate, the committed step in the de novo pyrimidine nucleotide biosynthesis pathway. The polypeptide is Aspartate carbamoyltransferase catalytic subunit (Chlorobium phaeovibrioides (strain DSM 265 / 1930) (Prosthecochloris vibrioformis (strain DSM 265))).